Reading from the N-terminus, the 273-residue chain is Putative phosphoenolpyruvate synthase regulatory protein (273 aa).

153–160 (GVSRSGKT) lines the ADP pocket.

Belongs to the pyruvate, phosphate/water dikinase regulatory protein family. PSRP subfamily.

The enzyme catalyses [pyruvate, water dikinase] + ADP = [pyruvate, water dikinase]-phosphate + AMP + H(+). It carries out the reaction [pyruvate, water dikinase]-phosphate + phosphate + H(+) = [pyruvate, water dikinase] + diphosphate. In terms of biological role, bifunctional serine/threonine kinase and phosphorylase involved in the regulation of the phosphoenolpyruvate synthase (PEPS) by catalyzing its phosphorylation/dephosphorylation. The protein is Putative phosphoenolpyruvate synthase regulatory protein of Polaromonas naphthalenivorans (strain CJ2).